The sequence spans 290 residues: MPSLRDIRNRIGSVRSTRQITKAMKMVSAAKLRRAQDAVLKTRPYAVLLDQTLSRLAARAAAEEQVAHPLLAPRAQRTAEVVVVTSDRGLAGGFNSNICRFVQRFLTENADRFERIALSTVGKKGREYFKARRLEIRKDYTGVHANLAYEKAEALAREATERYLAGEVDAVFLAYNEFKSAISQKQVVVQLLPIDTSAAGADATGIDFKYEPSREALLAELLPRHVAMQVWRALLESAASEHGARMSAMESATKNAEEMIASLSLQYNRARQAYVTKELMEIVGGAEALK.

It belongs to the ATPase gamma chain family. F-type ATPases have 2 components, CF(1) - the catalytic core - and CF(0) - the membrane proton channel. CF(1) has five subunits: alpha(3), beta(3), gamma(1), delta(1), epsilon(1). CF(0) has three main subunits: a, b and c.

It localises to the cell inner membrane. In terms of biological role, produces ATP from ADP in the presence of a proton gradient across the membrane. The gamma chain is believed to be important in regulating ATPase activity and the flow of protons through the CF(0) complex. This is ATP synthase gamma chain from Anaeromyxobacter sp. (strain K).